The chain runs to 186 residues: Peptidyl-tRNA hydrolase (186 aa).

Y13 serves as a coordination point for tRNA. H18 (proton acceptor) is an active-site residue. Residues Y59, N61, and N107 each contribute to the tRNA site.

This sequence belongs to the PTH family. As to quaternary structure, monomer.

The protein localises to the cytoplasm. It catalyses the reaction an N-acyl-L-alpha-aminoacyl-tRNA + H2O = an N-acyl-L-amino acid + a tRNA + H(+). Functionally, hydrolyzes ribosome-free peptidyl-tRNAs (with 1 or more amino acids incorporated), which drop off the ribosome during protein synthesis, or as a result of ribosome stalling. Catalyzes the release of premature peptidyl moieties from peptidyl-tRNA molecules trapped in stalled 50S ribosomal subunits, and thus maintains levels of free tRNAs and 50S ribosomes. The chain is Peptidyl-tRNA hydrolase from Thermotoga petrophila (strain ATCC BAA-488 / DSM 13995 / JCM 10881 / RKU-1).